The sequence spans 139 residues: D-ribose pyranase (139 aa).

His20 functions as the Proton donor in the catalytic mechanism. Substrate is bound by residues Asp28, His106, and Tyr128 to Asn130.

It belongs to the RbsD / FucU family. RbsD subfamily. In terms of assembly, homodecamer.

Its subcellular location is the cytoplasm. The catalysed reaction is beta-D-ribopyranose = beta-D-ribofuranose. Its pathway is carbohydrate metabolism; D-ribose degradation; D-ribose 5-phosphate from beta-D-ribopyranose: step 1/2. Its function is as follows. Catalyzes the interconversion of beta-pyran and beta-furan forms of D-ribose. This Photobacterium profundum (strain SS9) protein is D-ribose pyranase.